A 113-amino-acid polypeptide reads, in one-letter code: Ribosome-associated factor Y (113 aa).

Residue Lys-66 is modified to N6-acetyllysine. The disordered stretch occupies residues 91–113 (KGEARRAATSVKDANFVEEVEEE).

It belongs to the HPF/YfiA ribosome-associated protein family. YfiA subfamily. In terms of assembly, associates mainly with 70S ribosomes.

During stationary phase, prevents 70S dimer formation, probably in order to regulate translation efficiency during transition between the exponential and the stationary phases. In addition, during environmental stress such as cold shock or excessive cell density at stationary phase, stabilizes the 70S ribosome against dissociation, inhibits translation initiation and increase translation accuracy. When normal growth conditions are restored, is quickly released from the ribosome. The chain is Ribosome-associated factor Y from Escherichia coli O157:H7.